The following is a 67-amino-acid chain: ATP synthase protein 8 (67 aa).

A helical transmembrane segment spans residues 8–24; sequence TWSITIMSMIMTLFIVF. At Lys54 the chain carries N6-acetyllysine; alternate. Position 54 is an N6-succinyllysine; alternate (Lys54). The residue at position 57 (Lys57) is an N6-acetyllysine.

It belongs to the ATPase protein 8 family. F-type ATPases have 2 components, CF(1) - the catalytic core - and CF(0) - the membrane proton channel. Component of an ATP synthase complex composed of ATP5PB, ATP5MC1, ATP5F1E, ATP5PD, ATP5ME, ATP5PF, ATP5MF, MT-ATP6, MT-ATP8, ATP5F1A, ATP5F1B, ATP5F1D, ATP5F1C, ATP5PO, ATP5MG, ATP5MK and ATP5MJ. Interacts with PRICKLE3.

Its subcellular location is the mitochondrion membrane. Mitochondrial membrane ATP synthase (F(1)F(0) ATP synthase or Complex V) produces ATP from ADP in the presence of a proton gradient across the membrane which is generated by electron transport complexes of the respiratory chain. F-type ATPases consist of two structural domains, F(1) - containing the extramembraneous catalytic core and F(0) - containing the membrane proton channel, linked together by a central stalk and a peripheral stalk. During catalysis, ATP synthesis in the catalytic domain of F(1) is coupled via a rotary mechanism of the central stalk subunits to proton translocation. Part of the complex F(0) domain. Minor subunit located with subunit a in the membrane. This is ATP synthase protein 8 (MT-ATP8) from Felis silvestris lybica (African wildcat).